The following is a 340-amino-acid chain: Fructose-bisphosphate aldolase (340 aa).

Residue serine 53 coordinates D-glyceraldehyde 3-phosphate. The active-site Proton donor is aspartate 95. Residues histidine 96, aspartate 131, glutamate 161, and histidine 212 each contribute to the Zn(2+) site. Glycine 213 lines the dihydroxyacetone phosphate pocket. Histidine 249 provides a ligand contact to Zn(2+). Dihydroxyacetone phosphate contacts are provided by residues 250–252 (GGS) and 271–274 (NLDT).

Belongs to the class II fructose-bisphosphate aldolase family. The cofactor is Zn(2+).

It carries out the reaction beta-D-fructose 1,6-bisphosphate = D-glyceraldehyde 3-phosphate + dihydroxyacetone phosphate. Its pathway is carbohydrate degradation; glycolysis; D-glyceraldehyde 3-phosphate and glycerone phosphate from D-glucose: step 4/4. In terms of biological role, catalyzes the aldol condensation of dihydroxyacetone phosphate (DHAP or glycerone-phosphate) with glyceraldehyde 3-phosphate (G3P) to form fructose 1,6-bisphosphate (FBP) in gluconeogenesis and the reverse reaction in glycolysis. This Streptomyces galbus protein is Fructose-bisphosphate aldolase (fba).